Reading from the N-terminus, the 199-residue chain is BREX protein BrxA (199 aa).

This sequence belongs to the BrxA family.

In terms of biological role, BREX systems (bacteriophage exclusion) provide immunity against bacteriophage. Part of a type 1 BREX system which protects against dsDNA phage. This system allows phage adsorption but prevents phage DNA replication, without degradation of the phage DNA. Methylation of bacterial DNA by PglX guides self/non-self discrimination. This is BREX protein BrxA from Paramagnetospirillum magneticum (strain ATCC 700264 / AMB-1) (Magnetospirillum magneticum).